The following is a 446-amino-acid chain: Signal recognition particle 54 kDa protein (446 aa).

GTP-binding positions include 104–111, 184–188, and 242–245; these read GLQGSGKT, DTAGR, and TKMD.

This sequence belongs to the GTP-binding SRP family. SRP54 subfamily. In terms of assembly, part of the signal recognition particle protein translocation system, which is composed of SRP and FtsY. Archaeal SRP consists of a 7S RNA molecule of 300 nucleotides and two protein subunits: SRP54 and SRP19.

It localises to the cytoplasm. It carries out the reaction GTP + H2O = GDP + phosphate + H(+). Functionally, involved in targeting and insertion of nascent membrane proteins into the cytoplasmic membrane. Binds to the hydrophobic signal sequence of the ribosome-nascent chain (RNC) as it emerges from the ribosomes. The SRP-RNC complex is then targeted to the cytoplasmic membrane where it interacts with the SRP receptor FtsY. The sequence is that of Signal recognition particle 54 kDa protein from Methanocorpusculum labreanum (strain ATCC 43576 / DSM 4855 / Z).